The sequence spans 449 residues: Tubulin beta chain (449 aa).

8 residues coordinate GTP: Q11, E69, S138, G142, T143, G144, N204, and N226. Mg(2+) is bound at residue E69. Residues 426–449 (QDATAEEEGEFDEEEGEMGAEEGA) are disordered. Residues 429–449 (TAEEEGEFDEEEGEMGAEEGA) show a composition bias toward acidic residues.

It belongs to the tubulin family. As to quaternary structure, dimer of alpha and beta chains. A typical microtubule is a hollow water-filled tube with an outer diameter of 25 nm and an inner diameter of 15 nM. Alpha-beta heterodimers associate head-to-tail to form protofilaments running lengthwise along the microtubule wall with the beta-tubulin subunit facing the microtubule plus end conferring a structural polarity. Microtubules usually have 13 protofilaments but different protofilament numbers can be found in some organisms and specialized cells. Requires Mg(2+) as cofactor.

It is found in the cytoplasm. The protein localises to the cytoskeleton. Its function is as follows. Tubulin is the major constituent of microtubules, a cylinder consisting of laterally associated linear protofilaments composed of alpha- and beta-tubulin heterodimers. Microtubules grow by the addition of GTP-tubulin dimers to the microtubule end, where a stabilizing cap forms. Below the cap, tubulin dimers are in GDP-bound state, owing to GTPase activity of alpha-tubulin. The sequence is that of Tubulin beta chain from Toxoplasma gondii.